Reading from the N-terminus, the 658-residue chain is Protein teflon (658 aa).

The C2H2-type 1 zinc-finger motif lies at 33–56 (LYCHFCRDLFTQLPEFLRHLQGAH). Disordered regions lie at residues 78 to 127 (EQDD…SEQK) and 151 to 175 (HINN…SESN). Over residues 100-111 (IPAKSEDSRAID) the composition is skewed to basic and acidic residues. The segment covering 118–127 (DNSPVKSEQK) has biased composition (polar residues). The C2H2-type 2; degenerate zinc finger occupies 608–630 (YFCKCCDDIFTLNEDYTRHLVSQ). The segment at 634–657 (YQCTKCIKAFKYRGHFEKHLQNVH) adopts a C2H2-type 3 zinc-finger fold.

This sequence belongs to the Teflon family.

The protein resides in the nucleus. The protein localises to the chromosome. In terms of biological role, specifically required in males for proper segregation of autosomal bivalents at meiosis I. Expression is required in the male germ line prior to spermatocyte stage S4. May have a role as a bridging molecule maintaining adhesion to hold autosome bivalents together via heterochromatic connections. The polypeptide is Protein teflon (Drosophila erecta (Fruit fly)).